Consider the following 303-residue polypeptide: N-acetyl-D-glucosamine kinase (303 aa).

ATP-binding positions include 4–11 (GFDIGGTK) and 133–140 (GVGGGLVL). Zn(2+)-binding residues include His-157, Cys-177, Cys-179, and Cys-184.

It belongs to the ROK (NagC/XylR) family. NagK subfamily.

It carries out the reaction N-acetyl-D-glucosamine + ATP = N-acetyl-D-glucosamine 6-phosphate + ADP + H(+). It participates in cell wall biogenesis; peptidoglycan recycling. Functionally, catalyzes the phosphorylation of N-acetyl-D-glucosamine (GlcNAc) derived from cell-wall degradation, yielding GlcNAc-6-P. This Citrobacter koseri (strain ATCC BAA-895 / CDC 4225-83 / SGSC4696) protein is N-acetyl-D-glucosamine kinase.